The primary structure comprises 31 residues: Basic phospholipase A2 13 (31 aa).

It belongs to the phospholipase A2 family. Group I subfamily. Ca(2+) serves as cofactor. In terms of tissue distribution, expressed by the venom gland.

The protein localises to the secreted. It carries out the reaction a 1,2-diacyl-sn-glycero-3-phosphocholine + H2O = a 1-acyl-sn-glycero-3-phosphocholine + a fatty acid + H(+). Its function is as follows. Snake venom phospholipase A2 (PLA2) that inhibits neuromuscular transmission by blocking acetylcholine release from the nerve termini. PLA2 catalyzes the calcium-dependent hydrolysis of the 2-acyl groups in 3-sn-phosphoglycerides. The protein is Basic phospholipase A2 13 of Bungarus fasciatus (Banded krait).